The following is a 915-amino-acid chain: Protein O-mannosyl-transferase TMTC3 (915 aa).

Over 1 to 8 (MANINLKE) the chain is Cytoplasmic. The helical transmembrane segment at 9-29 (ITLIVGVVTACYWNSLFCGFV) threads the bilayer. Residues 30 to 93 (FDDVSAILDN…LSELKPMSYH (64 aa)) lie on the Extracellular side of the membrane. A helical membrane pass occupies residues 94 to 114 (LLNMIFHAVVSVIFLKVCKLF). At 115 to 120 (LDNKSS) the chain is on the cytoplasmic side. 2 helical membrane passes run 121-139 (VIAS…AVTG) and 140-158 (VVGR…AFLS). Over 159 to 166 (YTRSKGPD) the chain is Cytoplasmic. Residues 167-187 (NSIIWTPIALTVFLVAVATLC) form a helical membrane-spanning segment. Over 188–193 (KEQGIT) the chain is Extracellular. Residues 194 to 214 (VVGICCVYEVFIAQGYTLPLL) form a helical membrane-spanning segment. The Cytoplasmic segment spans residues 215–231 (CTTAGQFLRGKGSIPFS). A helical membrane pass occupies residues 232-252 (MLQTLVKLIVLMFSTLLLVVI). Residues 253 to 317 (RVQVIQSQLP…TIPLIESLLD (65 aa)) lie on the Extracellular side of the membrane. The chain crosses the membrane as a helical span at residues 318–338 (IRNLATFTFFCFLGMLGVFSI). At 339–353 (RYSGDSSKTVLMALC) the chain is on the cytoplasmic side. A helical membrane pass occupies residues 354–374 (LMALPFIPASNLFFPVGFVVA). The Extracellular segment spans residues 375–376 (ER). Residues 377-397 (VLYVPSMGFCILVAHGWQKIS) traverse the membrane as a helical segment. Topologically, residues 398–404 (TKSVFKK) are cytoplasmic. A helical membrane pass occupies residues 405 to 423 (LSWICLSMVILTHSLKTFH). Topologically, residues 424 to 915 (RNWDWESEYT…EEIERILNGE (492 aa)) are extracellular. 9 TPR repeats span residues 446-479 (AKLW…QPDD), 480-513 (IGAH…MPQI), 529-562 (NVYI…RPDF), 563-596 (KQAY…DRNN), 597-631 (ADLW…NPKH), 669-702 (ANGY…QADF), 703-736 (RSAL…YPDH), 738-771 (KGLI…DPSN), and 772-805 (VQGK…APHE). Asparagine 494 carries N-linked (GlcNAc...) asparagine glycosylation. A Phosphotyrosine modification is found at tyrosine 503. Asparagine 541 carries an N-linked (GlcNAc...) asparagine glycan. The tract at residues 848-892 (KEIRGESRQTQIVKTSDNKSQSKSNKQLGKNGDEETPHKTTKDIK) is disordered. Residue asparagine 865 is glycosylated (N-linked (GlcNAc...) asparagine). Over residues 865–874 (NKSQSKSNKQ) the composition is skewed to low complexity. The span at 878–892 (NGDEETPHKTTKDIK) shows a compositional bias: basic and acidic residues.

It belongs to the TMTC family.

It localises to the membrane. The protein localises to the endoplasmic reticulum. The catalysed reaction is a di-trans,poly-cis-dolichyl beta-D-mannosyl phosphate + L-seryl-[protein] = 3-O-(alpha-D-mannosyl)-L-seryl-[protein] + a di-trans,poly-cis-dolichyl phosphate + H(+). It carries out the reaction a di-trans,poly-cis-dolichyl beta-D-mannosyl phosphate + L-threonyl-[protein] = 3-O-(alpha-D-mannosyl)-L-threonyl-[protein] + a di-trans,poly-cis-dolichyl phosphate + H(+). It functions in the pathway protein modification; protein glycosylation. In terms of biological role, transfers mannosyl residues to the hydroxyl group of serine or threonine residues. The 4 members of the TMTC family are O-mannosyl-transferases dedicated primarily to the cadherin superfamily, each member seems to have a distinct role in decorating the cadherin domains with O-linked mannose glycans at specific regions. Also acts as O-mannosyl-transferase on other proteins such as PDIA3. Involved in the positive regulation of proteasomal protein degradation in the endoplasmic reticulum (ER), and the control of ER stress response. The polypeptide is Protein O-mannosyl-transferase TMTC3 (Homo sapiens (Human)).